The sequence spans 505 residues: Trans-cinnamate 4-monooxygenase (505 aa).

A helical membrane pass occupies residues 3 to 23; it reads LLLIEKTLVALFAAIIGAILI. Residues 213–218 and alanine 306 contribute to the (E)-cinnamate site; that span reads RSRLAQ. Heme is bound at residue cysteine 447.

The protein belongs to the cytochrome P450 family. Heme is required as a cofactor.

Its subcellular location is the membrane. The catalysed reaction is (E)-cinnamate + reduced [NADPH--hemoprotein reductase] + O2 = (E)-4-coumarate + oxidized [NADPH--hemoprotein reductase] + H2O + H(+). Its pathway is phenylpropanoid metabolism; trans-4-coumarate biosynthesis; trans-4-coumarate from trans-cinnamate: step 1/1. Inactivated by piperonylic acid. Its function is as follows. Catalyzes the first oxidative step of the phenylpropanoid pathway in higher plants by transforming trans-cinnamate into p-coumarate. The compounds formed by this pathway are essential components for lignification, pollination, and defense against ultraviolet light, predators and pathogens. Can also use 2-naphthoic acid as substrate. The chain is Trans-cinnamate 4-monooxygenase from Helianthus tuberosus (Jerusalem artichoke).